A 178-amino-acid chain; its full sequence is NADH-quinone oxidoreductase subunit I (178 aa).

2 4Fe-4S ferredoxin-type domains span residues 45–74 (RHPDTGLEKCIGCSLCAAACPAYAIYVEAA) and 90–119 (KVYEINMLRCIFCGLCEEACPTGAVVLGNE). [4Fe-4S] cluster-binding residues include C54, C57, C60, C64, C99, C102, C105, and C109.

Belongs to the complex I 23 kDa subunit family. In terms of assembly, NDH-1 is composed of 15 different subunits. Subunits NuoA, H, J, K, L, M, N constitute the membrane sector of the complex. The cofactor is [4Fe-4S] cluster.

It is found in the cell membrane. The enzyme catalyses a quinone + NADH + 5 H(+)(in) = a quinol + NAD(+) + 4 H(+)(out). NDH-1 shuttles electrons from NADH, via FMN and iron-sulfur (Fe-S) centers, to quinones in the respiratory chain. The immediate electron acceptor for the enzyme in this species is believed to be ubiquinone. Couples the redox reaction to proton translocation (for every two electrons transferred, four hydrogen ions are translocated across the cytoplasmic membrane), and thus conserves the redox energy in a proton gradient. The protein is NADH-quinone oxidoreductase subunit I of Deinococcus radiodurans (strain ATCC 13939 / DSM 20539 / JCM 16871 / CCUG 27074 / LMG 4051 / NBRC 15346 / NCIMB 9279 / VKM B-1422 / R1).